The chain runs to 215 residues: Large ribosomal subunit protein uL1 (215 aa).

The protein belongs to the universal ribosomal protein uL1 family. As to quaternary structure, part of the 50S ribosomal subunit.

Binds directly to 23S rRNA. Probably involved in E site tRNA release. Functionally, protein L1 is also a translational repressor protein, it controls the translation of its operon by binding to its mRNA. This chain is Large ribosomal subunit protein uL1, found in Cenarchaeum symbiosum (strain A).